The sequence spans 494 residues: Fumigaclavine B O-acetyltransferase easN (494 aa).

Belongs to the fumigaclavine B O-acetyltransferase family. In terms of assembly, monomer.

It catalyses the reaction fumigaclavine B + acetyl-CoA = fumigaclavine A + CoA. Its pathway is alkaloid biosynthesis; ergot alkaloid biosynthesis. Its function is as follows. Fumigaclavine B O-acetyltransferase; part of the gene cluster that mediates the biosynthesis of fumiclavanine C, a fungal ergot alkaloid. DmaW catalyzes the first step of ergot alkaloid biosynthesis by condensing dimethylallyl diphosphate (DMAP) and tryptophan to form 4-dimethylallyl-L-tryptophan. The second step is catalyzed by the methyltransferase easF that methylates 4-dimethylallyl-L-tryptophan in the presence of S-adenosyl-L-methionine, resulting in the formation of 4-dimethylallyl-L-abrine. The catalase easC and the FAD-dependent oxidoreductase easE then transform 4-dimethylallyl-L-abrine to chanoclavine-I which is further oxidized by EasD in the presence of NAD(+), resulting in the formation of chanoclavine-I aldehyde. EasA reduces chanoclavine-I aldehyde to dihydrochanoclavine-I aldehyde that spontaneously dehydrates to form 6,8-dimethyl-6,7-didehydroergoline. EasG then catalyzes the reduction of 6,8-dimethyl-6,7-didehydroergoline to form festuclavine. Hydrolysis of festuclavine by easM then leads to the formation of fumigaclavine B which is in turn acetylated by easN to fumigaclavine A. Finally, easL catalyzes the conversion of fumigaclavine A into fumigaclavine C by attaching a dimethylallyl moiety to C-2 of the indole nucleus. This chain is Fumigaclavine B O-acetyltransferase easN, found in Aspergillus fumigatus (strain ATCC MYA-4609 / CBS 101355 / FGSC A1100 / Af293) (Neosartorya fumigata).